The sequence spans 177 residues: Large ribosomal subunit protein uL6 (177 aa).

Belongs to the universal ribosomal protein uL6 family. Part of the 50S ribosomal subunit.

Functionally, this protein binds to the 23S rRNA, and is important in its secondary structure. It is located near the subunit interface in the base of the L7/L12 stalk, and near the tRNA binding site of the peptidyltransferase center. The sequence is that of Large ribosomal subunit protein uL6 from Rickettsia peacockii (strain Rustic).